The chain runs to 217 residues: KS1 protein (217 aa).

Residues 1–16 (MKLIIVLVMMLVCVYS) form the signal peptide. A compositionally biased stretch (basic and acidic residues) spans 24-47 (PKNHEVPAKKQFAETKVEKKKRSD). Disordered stretches follow at residues 24-58 (PKNH…DDDD) and 72-205 (EDDD…LKIK). 2 tandem repeats follow at residues 32–81 (KKQF…VDGG) and 98–147 (KKKK…YDED). The 2 X 50 AA approximate repeats stretch occupies residues 32 to 147 (KKQFAETKVE…EEDDDCYDED (116 aa)). 2 stretches are compositionally biased toward acidic residues: residues 48–58 (DGDEEICDDDD) and 72–94 (EDDD…DDCQ). The span at 98 to 110 (KKKKRETKPKLKK) shows a compositional bias: basic residues. Positions 114 to 145 (DEEEEECEEDDEDCEVEVDIEECDEEDDDCYD) are enriched in acidic residues. Over residues 149–188 (KKKKENKLKKESKKKNSKKTVPKNAKKSSKRSTSTKKTSQ) the composition is skewed to basic residues.

Expressed in tentacle-specific epithelial cells (battery cells) as well as in a small fraction of ectodermal epithelial cells in the gastric region subjacent to the tentacles (the tentacle formation region). The later cells are committed to become battery cells.

Its function is as follows. Responds to early signals of head formation in hydra. The protein is KS1 protein (KS1) of Hydra vulgaris (Hydra).